Reading from the N-terminus, the 385-residue chain is MDEFPTEYFLGTAVRLLENVKYRDSNYTREERIENLSYANNKAAAHFAQERQQRILKVNPKRLEASLRTIVGMVVYSWVKVSKELMADLSIHYTYTLILDDSEDDPHNNMLTFFDDLQAGREQKHPWWMLVNEHFPNVLRHFGPFCSLNLIRSTLDFFEGCWIEQYNFHGFPGSYDFPGFLRRMNGLGHCVGGSLWPKELFDEQKHFLEITSAVAQMENWMVWVNDLMSFYKEFDDPRDQTSLVKNYVVCDEISLTQALEKLTVDTLTSSEQMMEVFSDKDAKLMETIECFMHGYITWHLCDHRYRLKEVYEGTMHIETEDAIKFRKFYGQAAKVGAIEHEEWAFPTVAERIEVRLAEEKAAKDGQAVLTSAEPAVPQAAQEVLA.

Belongs to the trichodiene synthase family.

It carries out the reaction (2E,6E)-farnesyl diphosphate = trichodiene + diphosphate. It participates in sesquiterpene biosynthesis; trichothecene biosynthesis. TS is a member of the terpene cyclase group of enzymes. It catalyzes the isomerization and cyclization of farnesyl pyro-phosphate to form trichodiene, the first cyclic intermediate in the biosynthetic pathway for trichothecenes. It serves to branch trichothecene biosynthesis from the isoprenoid pathway. The protein is Trichodiene synthase (TRI5) of Paramyrothecium roridum (Myrothecium leaf spot fungus).